The following is a 398-amino-acid chain: uncharacterized protein (398 aa).

It belongs to the class-V pyridoxal-phosphate-dependent aminotransferase family. Homodimer.

Functionally, is essential for optimal growth. This is an uncharacterized protein from Mycobacterium tuberculosis (strain CDC 1551 / Oshkosh).